A 70-amino-acid chain; its full sequence is uncharacterized protein (70 aa).

Residues 14-34 (CLVVWFACVYSLLILVVLLLI) traverse the membrane as a helical segment.

The protein localises to the virion membrane. This is an uncharacterized protein from Homo sapiens (Human).